Here is a 514-residue protein sequence, read N- to C-terminus: 2-isopropylmalate synthase (514 aa).

The Pyruvate carboxyltransferase domain occupies 5 to 268 (LIIFDTTLRD…DVGIDTTQIV (264 aa)). The Mn(2+) site is built by D14, H202, H204, and N239. The tract at residues 395 to 514 (KFVSLSQHSE…KDDKLNPQRA (120 aa)) is regulatory domain.

The protein belongs to the alpha-IPM synthase/homocitrate synthase family. LeuA type 1 subfamily. In terms of assembly, homodimer. Mn(2+) serves as cofactor.

It localises to the cytoplasm. It catalyses the reaction 3-methyl-2-oxobutanoate + acetyl-CoA + H2O = (2S)-2-isopropylmalate + CoA + H(+). It participates in amino-acid biosynthesis; L-leucine biosynthesis; L-leucine from 3-methyl-2-oxobutanoate: step 1/4. Functionally, catalyzes the condensation of the acetyl group of acetyl-CoA with 3-methyl-2-oxobutanoate (2-ketoisovalerate) to form 3-carboxy-3-hydroxy-4-methylpentanoate (2-isopropylmalate). The chain is 2-isopropylmalate synthase from Burkholderia vietnamiensis (strain G4 / LMG 22486) (Burkholderia cepacia (strain R1808)).